The primary structure comprises 41 residues: Alpha-conotoxin-like Pu1.2 (41 aa).

A propeptide spanning residues 1–21 (LDGRNAAADFETSDLLAMTIR) is cleaved from the precursor. Disulfide bonds link C24–C30 and C25–C37. C37 carries the post-translational modification Cysteine amide. A propeptide spanning residues 38 to 41 (GGKR) is cleaved from the precursor.

The protein belongs to the conotoxin A superfamily. In terms of processing, non-native isomers 'ribbon' (with disulfide connectivity C1-C4, C2-C3) and 'beads' (with disulfide connectivity C1-C2, C3-C4) also inhibit high voltage-activated (HVA) calcium channel currents in rat DRG neurons (25-30% inhibition at 1 uM toxin). Post-translationally, mutants Pu1.2(9-16), [C3S; C9S]Pu1.2 and [C4S]Pu1.2(1-9) are all C-terminally amidated. As to expression, expressed by the venom duct.

Its subcellular location is the secreted. Functionally, alpha-conotoxins act on postsynaptic membranes, they bind to the nicotinic acetylcholine receptors (nAChR) and thus inhibit them. This toxin also inhibits high voltage-activated (HVA) calcium channel currents in rat DRG neurons (27% inhibition at 1 uM toxin) probably by activating GABA(B) receptors (GABBR1 and/or GABBR2). This chain is Alpha-conotoxin-like Pu1.2, found in Conus pulicarius (Flea-bitten cone).